Reading from the N-terminus, the 339-residue chain is tRNA-specific 2-thiouridylase MnmA (339 aa).

ATP is bound by residues 6–13 (AMSGGVDS) and M32. The active-site Nucleophile is the C92. C92 and C186 are joined by a disulfide. Position 116 (G116) interacts with ATP. The segment at 134 to 136 (KDQ) is interaction with tRNA. C186 (cysteine persulfide intermediate) is an active-site residue. Residues 288 to 289 (RY) form an interaction with tRNA region.

The protein belongs to the MnmA/TRMU family.

It localises to the cytoplasm. The enzyme catalyses S-sulfanyl-L-cysteinyl-[protein] + uridine(34) in tRNA + AH2 + ATP = 2-thiouridine(34) in tRNA + L-cysteinyl-[protein] + A + AMP + diphosphate + H(+). Functionally, catalyzes the 2-thiolation of uridine at the wobble position (U34) of tRNA, leading to the formation of s(2)U34. This Campylobacter curvus (strain 525.92) protein is tRNA-specific 2-thiouridylase MnmA.